The chain runs to 139 residues: D-ribose pyranase (139 aa).

The active-site Proton donor is the histidine 20. Substrate contacts are provided by residues aspartate 28, histidine 106, and tyrosine 128 to asparagine 130.

It belongs to the RbsD / FucU family. RbsD subfamily. Homodecamer.

It localises to the cytoplasm. It carries out the reaction beta-D-ribopyranose = beta-D-ribofuranose. It participates in carbohydrate metabolism; D-ribose degradation; D-ribose 5-phosphate from beta-D-ribopyranose: step 1/2. Functionally, catalyzes the interconversion of beta-pyran and beta-furan forms of D-ribose. The sequence is that of D-ribose pyranase from Proteus mirabilis (strain HI4320).